Here is a 308-residue protein sequence, read N- to C-terminus: tRNA dimethylallyltransferase 2 (308 aa).

13-20 (GPTASGKT) is an ATP binding site. Position 15–20 (15–20 (TASGKT)) interacts with substrate. Positions 38–41 (DSRQ) are interaction with substrate tRNA.

It belongs to the IPP transferase family. Monomer. Mg(2+) is required as a cofactor.

It catalyses the reaction adenosine(37) in tRNA + dimethylallyl diphosphate = N(6)-dimethylallyladenosine(37) in tRNA + diphosphate. Catalyzes the transfer of a dimethylallyl group onto the adenine at position 37 in tRNAs that read codons beginning with uridine, leading to the formation of N6-(dimethylallyl)adenosine (i(6)A). This is tRNA dimethylallyltransferase 2 from Bacteroides fragilis (strain YCH46).